The chain runs to 661 residues: Fusaric acid cluster transcription factor FUB12 (661 aa).

Positions 17-48 (CVPCRTRKIKCNAAVVGLPCGSCVSRECPDDC) form a DNA-binding region, zn(2)-C6 fungal-type. Disordered regions lie at residues 57–131 (TVKV…RPPG) and 151–184 (SAAQ…PQLD). Polar residues predominate over residues 73–98 (PDTNGSVLSPRQQQLPTNVSRQTTDS). A compositionally biased stretch (basic and acidic residues) spans 99–109 (SHSDPVEESIH). Over residues 110–119 (ASHTGSSLRN) the composition is skewed to polar residues. Residues 120–129 (DTPHSRDRRP) show a composition bias toward basic and acidic residues.

The protein resides in the nucleus. Functionally, efflux pump involved in export of biosynthesis of fusaric acid, a mycotoxin with low to moderate toxicity to animals and humans, but with high phytotoxic properties. Constitutes a self-protecting mechanism of the fungus against critical levels of FSA within the cell. The sequence is that of Fusaric acid cluster transcription factor FUB12 from Fusarium oxysporum f. sp. lycopersici (strain 4287 / CBS 123668 / FGSC 9935 / NRRL 34936) (Fusarium vascular wilt of tomato).